A 327-amino-acid polypeptide reads, in one-letter code: (-)-delta-cadinene synthase (327 aa).

Residues aspartate 84, aspartate 85, asparagine 222, threonine 226, and glutamate 230 each contribute to the Mg(2+) site.

It belongs to the terpene synthase family.

It carries out the reaction (2E,6E)-farnesyl diphosphate = (-)-delta-cadinene + diphosphate. Catalyzes the conversion of (2E,6E)-farnesyl diphosphate into (-)-delta-cadinene. Cyclization mechanism involves an intermediate nerolidyl diphosphate leading to a helminthogermacradienyl cation. The polypeptide is (-)-delta-cadinene synthase (Streptomyces clavuligerus).